The primary structure comprises 584 residues: MREKYRQERDKRSVGRTYQFARGDFSRYARDPYTERQEREPLTDEVDVAVVGAGIGGLLTGAHLRKETGLERIRLIDGAGDVGGTWYWNRFPGVRCDVESYIYMPLLEETGTIPREKYSTGPEIFAHLQQIAHRYDLYRDALFQTTVTELRWDEAAGRWLVSTDRGDLIRARYVAMSIGLMHRPKLPGLPGLETFAGHSFHTSRWDFDYTGGDSTGGLTKLKDKKVGVIGTGSTTIQLAPHLAEWAEQLILFQRTPAAVDVRGNRPTPPEWAAGLAPGWQQRRMENFHALTSGVPQDEDLVQDRWTQTTAKLAAAILPTGDTGGDPKERALAAERADFLKMEELRARIDSVVTDPATAAALKPYYRVYCKRPCFHDGYLQTFNRPNVTLVDTQGQGVERLTPAGVVANGREYPLDCLIFATGYEHEFAVPYTERAGYDIVGRDGLRLSEKWADGARTLHGLQVNGFPNCFILSKVQAGRHVNIAYMLGEQTRHLAHIVKCVEERGHQVVEASEAGEKEWVEEILRLATNDIDFLENCTPGLYNNEGDPSGLPLLNSSYGGGSVEFVNILRRWREAGDLAGLELR.

Residues 55 to 56, 77 to 78, 85 to 86, 97 to 98, Y103, V147, and M486 contribute to the FAD site; these read IG, DG, TW, and DV.

This sequence belongs to the FAD-binding monooxygenase family. The cofactor is FAD.

The enzyme catalyses 1-deoxy-11-oxopentalenate + NADPH + O2 + H(+) = pentalenolactone D + NADP(+) + H2O. The protein operates within antibiotic biosynthesis; pentalenolactone biosynthesis. In terms of biological role, catalyzes the flavin-dependent Baeyer-Villiger oxidation of 1-deoxy-11-oxopentalenic acid to pentalenolactone D in the biosynthesis of pentalenolactone antibiotic. In Streptomyces exfoliatus (Streptomyces hydrogenans), this protein is Pentalenolactone D synthase (penE).